Consider the following 312-residue polypeptide: tRNA dimethylallyltransferase (312 aa).

ATP is bound at residue 18 to 25 (GPTASGKS). 20-25 (TASGKS) provides a ligand contact to substrate. 2 interaction with substrate tRNA regions span residues 43 to 46 (DSMQ) and 167 to 171 (QRILR).

This sequence belongs to the IPP transferase family. As to quaternary structure, monomer. Requires Mg(2+) as cofactor.

It carries out the reaction adenosine(37) in tRNA + dimethylallyl diphosphate = N(6)-dimethylallyladenosine(37) in tRNA + diphosphate. Functionally, catalyzes the transfer of a dimethylallyl group onto the adenine at position 37 in tRNAs that read codons beginning with uridine, leading to the formation of N6-(dimethylallyl)adenosine (i(6)A). In Azorhizobium caulinodans (strain ATCC 43989 / DSM 5975 / JCM 20966 / LMG 6465 / NBRC 14845 / NCIMB 13405 / ORS 571), this protein is tRNA dimethylallyltransferase.